A 622-amino-acid chain; its full sequence is Palmitoyltransferase pfa3 (622 aa).

Residues 1 to 38 (MDATPYTTSSTSTALDSPSSLSATMARRWARKLERYCC) are Cytoplasmic-facing. Residues 39–59 (TCVTYFPLAFVYSMTSWAAYV) form a helical membrane-spanning segment. Over 60–76 (DVSLSTTPSRVTWLGHS) the chain is Vacuolar. The chain crosses the membrane as a helical span at residues 77–97 (YGFIAVVLYLLANWCYTYAVF). At 98 to 175 (TSPGSTTNEY…ATCVGLRNHK (78 aa)) the chain is on the cytoplasmic side. The DHHC domain occupies 132–182 (RFCKKCQARKPDRAHHCSTCRRCVLKMDHHCPWLATCVGLRNHKAFLLFLI). Residues 176 to 196 (AFLLFLIYTSVFCWVSFAGSA) traverse the membrane as a helical segment. At 197-217 (SWVWEEIMSNTTYVETLMPVN) the chain is on the vacuolar side. The chain crosses the membrane as a helical span at residues 218-238 (YIMLSVISGIIGIVLSAFCGW). The Cytoplasmic portion of the chain corresponds to 239-622 (HIYLASRGQT…EGRSNDDGVD (384 aa)). Disordered regions lie at residues 298–334 (PGVT…ELQA), 419–507 (REEQ…YADD), and 533–622 (DDVL…DGVD). Residues 302–311 (RPEEGEEMRR) are compositionally biased toward basic and acidic residues. Residues 313–330 (TTPSGSSQRNDLASQHNP) are compositionally biased toward polar residues. The span at 419–428 (REEQRQRERQ) shows a compositional bias: basic and acidic residues. A compositionally biased stretch (polar residues) spans 443–455 (YTPTWTPPNQQHP). Residues 466–488 (PSSQPQTQRNSNSSSPSFTPSRR) show a composition bias toward low complexity. Residues 533–547 (DDVLNDDDDDDEDYF) are compositionally biased toward acidic residues. The span at 610 to 622 (NGEEGRSNDDGVD) shows a compositional bias: basic and acidic residues.

It belongs to the DHHC palmitoyltransferase family. PFA3 subfamily. Autopalmitoylated.

It is found in the vacuole membrane. The catalysed reaction is L-cysteinyl-[protein] + hexadecanoyl-CoA = S-hexadecanoyl-L-cysteinyl-[protein] + CoA. Its function is as follows. Palmitoyltransferase specific for vac8. Palmitoylates vac8 at one or more of its N-terminal cysteine residues, which is required for its proper membrane localization. This chain is Palmitoyltransferase pfa3 (ptr-3), found in Neurospora crassa (strain ATCC 24698 / 74-OR23-1A / CBS 708.71 / DSM 1257 / FGSC 987).